Consider the following 30-residue polypeptide: Cytochrome b6/f complex 12.6 kDa peptide (30 aa).

A disordered region spans residues 1–30; sequence SGSGVRSAKKGGKAQGGQAGVGYKGSTEPG. The span at 13 to 23 shows a compositional bias: gly residues; it reads KAQGGQAGVGY.

The protein localises to the plastid. The protein resides in the chloroplast. In terms of biological role, may be a component of the cytochrome b6/f complex which is part of the photosynthetic respiratory chain. The protein is Cytochrome b6/f complex 12.6 kDa peptide of Euglena gracilis.